We begin with the raw amino-acid sequence, 183 residues long: MTKQPEDWLDDVPGDDVEDEDDEIIWVSKSEIKRDAEELKRLGAELVDLGKNALDKIPLDTDLRDAIELAQRIKKEGRRRQLQLIGKMLRNRDVDPIRQALDKLKNRHNQQVALFHKLEQIRDRLIDDGDDAVAEVLNLWPDADRQQLRSLIRNAKKEKEGNKPPKSARLIFQYLRELAENEG.

It belongs to the DarP family.

Its subcellular location is the cytoplasm. Its function is as follows. Member of a network of 50S ribosomal subunit biogenesis factors which assembles along the 30S-50S interface, preventing incorrect 23S rRNA structures from forming. Promotes peptidyl transferase center (PTC) maturation. The chain is Dual-action ribosomal maturation protein DarP from Klebsiella pneumoniae (strain 342).